The chain runs to 374 residues: MAMKKKISTSSIMPDWSQLPEELLHIISTHLEDHYFDAVHARSVCRSWRSTFPFPSSLLRQSYSLPAFPLESKDLCCTLEKVPLFLFRVLTPPDAADASSEYFLGGLGQDKSNDHVELPSPLQCSVKVNVPGTEPILMNMLDCQIIPLGHKYRLMIGCNPEEYSAAFLPLNEQGGGGEFVALLDCTDLFLVLRSTEMRWIRLEKPSTASCKELFTFRGRFYATFFNGDTFVIDPSSLEATPLTPHIDSNFLVPSGNEELFLVKTDFLRCRVSRLDEEAAEWVEVSDLGDRVLFLGGHLGNFYCSAKELPHGCGLTGDSILFTVGSRNVTYPYKYGVHTNKRKAEDNINCWRSSRENRVLFRNRYDPVLSFRVER.

Residues 14 to 63 (PDWSQLPEELLHIISTHLEDHYFDAVHARSVCRSWRSTFPFPSSLLRQSY) form the F-box domain. Kelch repeat units lie at residues 100 to 150 (SEYF…PLGH) and 249 to 301 (NFLV…LGNF).

The chain is F-box/kelch-repeat protein At2g24250 from Arabidopsis thaliana (Mouse-ear cress).